The sequence spans 457 residues: MATQDADIIIIGAGITGCALGAALGRQGRKVLVLERDMSEPDRIVGELLQPGGIEALEKIGIADAVEGIDGQWTSGYQIFYGDSNVSVPYPSKPNGGAYQGIGFHYGRFVMNLRKALTSTPNVTVTEATVNELLRDETGEVITGVVTSSKKSESPVEYKAPLTIVCDGCFSKFRKAFIDHPIQVTDHFLGLILTNPDYIAPGRGHVILSKVAPMVLYPISSTEARILINYPGKNLPPMETLKKYVLESCVPNMPEKLRPSLKAAVYNDRLRSMPNQFLPPTVNRTKGMILVGDSNNMRHPLTGGGMTVCFHDAYLLSRFISPSAVPDLLDYERILNQMNKFHWKRKGYSFVINVLSIALYKLFTPKNRYMKALESGCIDYFKRGGNCVEGPIRLLGGLDHSPSHLIGHFYAVCLYGIYQYVLSGPALLMPVRIIESLLIFLQASLVIIPYILSEMSS.

FAD is bound by residues 15–16, 35–36, Arg-43, Arg-114, Val-130, Asp-293, and Met-306; these read IT and ER. The next 3 helical transmembrane spans lie at 347–364, 409–429, and 433–453; these read GYSF…KLFT, FYAV…ALLM, and IIES…YILS.

It belongs to the squalene monooxygenase family. The cofactor is FAD.

It localises to the microsome membrane. Its subcellular location is the endoplasmic reticulum membrane. The protein resides in the vacuole membrane. It carries out the reaction squalene + reduced [NADPH--hemoprotein reductase] + O2 = (S)-2,3-epoxysqualene + oxidized [NADPH--hemoprotein reductase] + H2O + H(+). Its pathway is terpene metabolism; lanosterol biosynthesis; lanosterol from farnesyl diphosphate: step 2/3. It participates in steroid metabolism; ergosterol biosynthesis. With respect to regulation, activity is blocked by the allylamine class antifungal terbinafine. Functionally, squalene epoxidase; part of the third module of ergosterol biosynthesis pathway that includes by the late steps of the pathway. Erg1 catalyzes the epoxidation of squalene into 2,3-epoxysqualene. The third module or late pathway involves the ergosterol synthesis itself through consecutive reactions that mainly occur in the endoplasmic reticulum (ER) membrane. Firstly, the squalene synthase erg9 catalyzes the condensation of 2 farnesyl pyrophosphate moieties to form squalene, which is the precursor of all steroids. Secondly, squalene is converted into lanosterol by the consecutive action of the squalene epoxidase erg1 and the lanosterol synthase erg7. The lanosterol 14-alpha-demethylase erg11/cyp1 catalyzes C14-demethylation of lanosterol to produce 4,4'-dimethyl cholesta-8,14,24-triene-3-beta-ol. In the next steps, a complex process involving various demethylation, reduction and desaturation reactions catalyzed by the C-14 reductase erg24 and the C-4 demethylation complex erg25-erg26-erg27 leads to the production of zymosterol. Erg28 likely functions in the C-4 demethylation complex reaction by tethering erg26 and Erg27 to the endoplasmic reticulum or to facilitate interaction between these proteins. Then, the sterol 24-C-methyltransferase erg6 catalyzes the methyl transfer from S-adenosyl-methionine to the C-24 of zymosterol to form fecosterol. The C-8 sterol isomerase erg2 catalyzes the reaction which results in unsaturation at C-7 in the B ring of sterols and thus converts fecosterol to episterol. The sterol-C5-desaturases erg31 and erg32 then catalyze the introduction of a C-5 double bond in the B ring to produce 5-dehydroepisterol. The C-22 sterol desaturase erg5 further converts 5-dehydroepisterol into ergosta-5,7,22,24(28)-tetraen-3beta-ol by forming the C-22(23) double bond in the sterol side chain. Finally, ergosta-5,7,22,24(28)-tetraen-3beta-ol is substrate of the C-24(28) sterol reductase erg4 to produce ergosterol. In the genus Schizosaccharomyces, a second route exists between lanosterol and fecosterol, via the methylation of lanosterol to eburicol by erg6, followed by C14-demethylation by erg11/cyp1 and C4-demethylation by the demethylation complex erg25-erg26-erg27. The chain is Squalene epoxidase erg1 from Schizosaccharomyces pombe (strain 972 / ATCC 24843) (Fission yeast).